Reading from the N-terminus, the 494-residue chain is Cobyric acid synthase (494 aa).

One can recognise a GATase cobBQ-type domain in the interval Glu-248–Trp-445. Catalysis depends on Cys-329, which acts as the Nucleophile. Residue His-437 is part of the active site.

It belongs to the CobB/CobQ family. CobQ subfamily.

The protein operates within cofactor biosynthesis; adenosylcobalamin biosynthesis. In terms of biological role, catalyzes amidations at positions B, D, E, and G on adenosylcobyrinic A,C-diamide. NH(2) groups are provided by glutamine, and one molecule of ATP is hydrogenolyzed for each amidation. This Synechococcus sp. (strain WH7803) protein is Cobyric acid synthase.